A 735-amino-acid polypeptide reads, in one-letter code: 1,4-alpha-glucan branching enzyme GlgB (735 aa).

Catalysis depends on Asp-418, which acts as the Nucleophile. Catalysis depends on Glu-471, which acts as the Proton donor.

This sequence belongs to the glycosyl hydrolase 13 family. GlgB subfamily. Monomer.

The catalysed reaction is Transfers a segment of a (1-&gt;4)-alpha-D-glucan chain to a primary hydroxy group in a similar glucan chain.. It participates in glycan biosynthesis; glycogen biosynthesis. Functionally, catalyzes the formation of the alpha-1,6-glucosidic linkages in glycogen by scission of a 1,4-alpha-linked oligosaccharide from growing alpha-1,4-glucan chains and the subsequent attachment of the oligosaccharide to the alpha-1,6 position. This is 1,4-alpha-glucan branching enzyme GlgB from Agrobacterium fabrum (strain C58 / ATCC 33970) (Agrobacterium tumefaciens (strain C58)).